Reading from the N-terminus, the 363-residue chain is MTVAQIHSDCSSSMLPRHIKDDVEPIHLLGFNIARKPKWLQFVLLSGAIFILYLGYGYMQELIFKLPGMKPFGWTLTLIQFVIYSGCGYAECAVWHNTKRMIPWRIYGVIAFFTVATMGLSNASVGYLNYPTQVIFKCCKLIPVLIGGILIQGKRYGWIDISAAILMSLGIIMFTLADNKVSPNFDSRGYIMISGALLADAVIGNIQEKNMKKYGGSSNEVVLYSYGIGSVFIFTYVVLSGEIFSAIPFFLENSWKTFGYALIFSFLGYLGVNVVLTHIKVFGALVAVTVTTLRKALTIILSFLLFSKPFTIEYVYAGSVVMLAIYLNLYSKNKASWDHMIRIFVARAMGYHAVATKKDPMMV.

10 consecutive transmembrane segments (helical) span residues 39–59, 63–83, 106–126, 131–151, 157–177, 187–206, 231–251, 257–277, 281–301, and 310–330; these read WLQFVLLSGAIFILYLGYGYM, IFKLPGMKPFGWTLTLIQFVI, IYGVIAFFTVATMGLSNASVG, PTQVIFKCCKLIPVLIGGILI, GWIDISAAILMSLGIIMFTLA, SRGYIMISGALLADAVIGNI, VFIFTYVVLSGEIFSAIPFFL, TFGYALIFSFLGYLGVNVVLT, VFGALVAVTVTTLRKALTIIL, and FTIEYVYAGSVVMLAIYLNLY.

The protein belongs to the nucleotide-sugar transporter family. SLC35B subfamily.

Its subcellular location is the golgi apparatus membrane. Functionally, mediates the transport of adenosine 3'-phospho 5'-phosphosulfate (PAPS), from cytosol into Golgi. PAPS is a universal sulfuryl donor for sulfation events that take place in the Golgi. This Caenorhabditis briggsae protein is Adenosine 3'-phospho 5'-phosphosulfate transporter 2 (pst-2).